The following is a 376-amino-acid chain: Flagellin B (376 aa).

The stretch at 103-129 (SNSSSERRAIQEEVSALNDELNRIAET) forms a coiled coil.

It belongs to the bacterial flagellin family. In terms of assembly, heteromer of multiple flagellin subunits including FlaA, FlaB, FlaC, FlaD and FlaE.

Its subcellular location is the secreted. The protein resides in the bacterial flagellum. Its function is as follows. Flagellin is the subunit protein which polymerizes to form the filaments of bacterial flagella. FlaB is not essential for flagellar synthesis and motility. This chain is Flagellin B (flaB), found in Vibrio cholerae serotype O1 (strain ATCC 39541 / Classical Ogawa 395 / O395).